A 493-amino-acid polypeptide reads, in one-letter code: Glutamyl-tRNA(Gln) amidotransferase subunit A (493 aa).

Active-site charge relay system residues include lysine 78 and serine 159. Serine 183 serves as the catalytic Acyl-ester intermediate.

This sequence belongs to the amidase family. GatA subfamily. Heterotrimer of A, B and C subunits.

It catalyses the reaction L-glutamyl-tRNA(Gln) + L-glutamine + ATP + H2O = L-glutaminyl-tRNA(Gln) + L-glutamate + ADP + phosphate + H(+). In terms of biological role, allows the formation of correctly charged Gln-tRNA(Gln) through the transamidation of misacylated Glu-tRNA(Gln) in organisms which lack glutaminyl-tRNA synthetase. The reaction takes place in the presence of glutamine and ATP through an activated gamma-phospho-Glu-tRNA(Gln). The polypeptide is Glutamyl-tRNA(Gln) amidotransferase subunit A (Sphingopyxis alaskensis (strain DSM 13593 / LMG 18877 / RB2256) (Sphingomonas alaskensis)).